Here is a 758-residue protein sequence, read N- to C-terminus: Actin filament-associated protein 1-like 1 (758 aa).

The segment at 91–194 (YRDSSENLSC…YESYDEEDEE (104 aa)) is disordered. Residues 102–120 (LPPPPSAPPPPLPTTPPPE) are compositionally biased toward pro residues. Residues 137-148 (YITSRNSSSPPN) are compositionally biased toward polar residues. The segment covering 177–186 (ESDGLSSSYE) has biased composition (low complexity). Residues 216–312 (DSRICAFLLR…WLRVIKEVIS (97 aa)) enclose the PH 1 domain. The interval 335–369 (SHDKTSDSDSAANGENSSLSSGKENRDTGKCRKGG) is disordered. A compositionally biased stretch (polar residues) spans 342–356 (SDSAANGENSSLSSG). The PH 2 domain occupies 409–503 (EVPCCGYLSV…WLGLLLAQTG (95 aa)). Residues 602–690 (KTRAEEDARK…TEVKENLKKS (89 aa)) are a coiled coil. Positions 692 to 758 (AGGPTLGLAV…KAKEWEKKKP (67 aa)) are disordered. Residues 749–758 (KAKEWEKKKP) are compositionally biased toward basic and acidic residues.

Its subcellular location is the cytoplasm. It localises to the cell projection. The protein localises to the podosome. It is found in the invadopodium. The protein resides in the cytoskeleton. Its subcellular location is the stress fiber. In terms of biological role, may be involved in podosome and invadosome formation. This is Actin filament-associated protein 1-like 1 (afap1l1) from Xenopus tropicalis (Western clawed frog).